Reading from the N-terminus, the 466-residue chain is Asparagine--tRNA ligase (466 aa).

It belongs to the class-II aminoacyl-tRNA synthetase family. As to quaternary structure, homodimer.

Its subcellular location is the cytoplasm. It carries out the reaction tRNA(Asn) + L-asparagine + ATP = L-asparaginyl-tRNA(Asn) + AMP + diphosphate + H(+). The sequence is that of Asparagine--tRNA ligase from Vibrio vulnificus (strain YJ016).